The sequence spans 309 residues: MSPPGLVVVDKPAGMTSHDVVGRCRRIFATRRVGHAGTLDPMATGVLVLGVERATKILGLLTAAAKSYSATIRLGQATSTDDAEGDVVRSVDARHLTSQAIEAAVGGLRGDIHQVPSTVSAIKVAGKRAYKLVREGQAVELPARPVRIDRFEVRDLRAAGECVDVDVEVDCSSGTYVRALARDLGAALGVGGHLTALRRTRVGRFGLEQAYGLDELAECPRLSYSLDEACLLIFGRRDLSADEAEAAGNGRALAAAAAGNGRALAAAGIDGVYAACAPDGRVIALLRDEGARTRSVVVIRPATMQDGTS.

The Nucleophile role is filled by aspartate 40.

It belongs to the pseudouridine synthase TruB family. Type 1 subfamily.

The catalysed reaction is uridine(55) in tRNA = pseudouridine(55) in tRNA. Responsible for synthesis of pseudouridine from uracil-55 in the psi GC loop of transfer RNAs. This chain is tRNA pseudouridine synthase B, found in Mycobacterium avium (strain 104).